Consider the following 486-residue polypeptide: MRVAMVAYEVYPFAKVGGLADVVGSLPKVIEKQGVKVTVFMPFHKIVSKNCEKLGLEIKEVARAISLPNLQTKEKFDLYKSTVPATNVSVYFISNDYYFSADNVYEGPDLAEQSIFFSNAAIEAMKYLSETFDIVHAHDWQTGLVPVYLKTLYRTDPFFNRTATVFTIHNLGYQGVFNPGYMKFAGLPAYLFNIDGLEFYGQINFLKGGILFSDIVTTVSPTYAQEIQTEQFGEKLDGVLRLRAEDLYGILNGIDYSEYNPATDKRIYVNYDIDHIEKKKMNKSELQKELNLQVRDDVPLIGMINRLVDQKGLDLIEKIVDYMMMFDIQFVVLGTGDKKYEEFFKNIEKKYPQKISSNMKFDVDLAQKIYAASDMFLMPSRYEPCGLGQMYSLRYGTVPIVRYTGGLADSVKEYDPKTRDGNGFGFREYDTAHLLETVAKAVYFYKKEKDHWGKVVKNAMKTDVSWDRSAKQYLKIYQEALRKKQF.

Lys15 contacts ADP-alpha-D-glucose.

Belongs to the glycosyltransferase 1 family. Bacterial/plant glycogen synthase subfamily.

The catalysed reaction is [(1-&gt;4)-alpha-D-glucosyl](n) + ADP-alpha-D-glucose = [(1-&gt;4)-alpha-D-glucosyl](n+1) + ADP + H(+). Its pathway is glycan biosynthesis; glycogen biosynthesis. In terms of biological role, synthesizes alpha-1,4-glucan chains using ADP-glucose. The protein is Glycogen synthase of Pseudothermotoga lettingae (strain ATCC BAA-301 / DSM 14385 / NBRC 107922 / TMO) (Thermotoga lettingae).